Reading from the N-terminus, the 261-residue chain is Indole-3-glycerol phosphate synthase (261 aa).

Belongs to the TrpC family.

The enzyme catalyses 1-(2-carboxyphenylamino)-1-deoxy-D-ribulose 5-phosphate + H(+) = (1S,2R)-1-C-(indol-3-yl)glycerol 3-phosphate + CO2 + H2O. It functions in the pathway amino-acid biosynthesis; L-tryptophan biosynthesis; L-tryptophan from chorismate: step 4/5. The protein is Indole-3-glycerol phosphate synthase of Paraburkholderia xenovorans (strain LB400).